A 205-amino-acid chain; its full sequence is SREBP regulating gene protein (205 aa).

Residues 1 to 16 lie on the Cytoplasmic side of the membrane; that stretch reads MVNLAAMVWRRLLRKR. A helical transmembrane segment spans residues 17–35; the sequence is WVLALVFGLSLVYFLSSTF. Topologically, residues 36–205 are lumenal; the sequence is KQEERAVRDR…GESPPELFPA (170 aa). Asn67 carries N-linked (GlcNAc...) asparagine glycosylation.

It belongs to the SPRING family. Interacts with SCAP.

It is found in the golgi apparatus membrane. Functionally, positively regulates hepatic SREBP signaling pathway by modulating the proper localization of SCAP (SREBP cleavage-activating protein) to the endoplasmic reticulum, thereby controlling the level of functional SCAP. This Homo sapiens (Human) protein is SREBP regulating gene protein.